A 413-amino-acid chain; its full sequence is CinA-like protein (413 aa).

Belongs to the CinA family.

The polypeptide is CinA-like protein (Geotalea daltonii (strain DSM 22248 / JCM 15807 / FRC-32) (Geobacter daltonii)).